We begin with the raw amino-acid sequence, 491 residues long: HEPACAM family member 2 (491 aa).

An N-terminal signal peptide occupies residues 1–18 (MWLRVFTAFLSFTAGACS). 3 N-linked (GlcNAc...) asparagine glycosylation sites follow: N73, N117, and N153. Ig-like C2-type domains follow at residues 137–221 (PVVQ…SDII) and 223–319 (PTIY…THFT). 2 cysteine pairs are disulfide-bonded: C158–C207 and C258–C303. N308 is a glycosylation site (N-linked (GlcNAc...) asparagine). Residues 340–360 (LASITGISLFLIISMCLLFLW) traverse the membrane as a helical segment. Topologically, residues 361–491 (KKFQPYKVIK…GKHSRAKQCI (131 aa)) are cytoplasmic. Over residues 444 to 454 (QQQDHPESSSQ) the composition is skewed to polar residues. Disordered stretches follow at residues 444 to 466 (QQQD…DRHD) and 472 to 491 (ELGH…KQCI). Residues 472–482 (ELGHCKEQDKG) are compositionally biased toward basic and acidic residues.

In terms of processing, poly-ADP-ribosylated (PARsylated) by tankyrase TNKS during late G2 and prophase, leading to translocation to mitotic centrosomes. N-glycosylated.

It localises to the golgi apparatus membrane. The protein localises to the cytoplasm. It is found in the cytoskeleton. The protein resides in the spindle. Its subcellular location is the microtubule organizing center. It localises to the centrosome. The protein localises to the midbody. Its function is as follows. Required during prometaphase for centrosome maturation. Following poly-ADP-ribosylation (PARsylation) by TNKS, translocates from the Golgi apparatus to mitotic centrosomes and plays a key role in the formation of robust microtubules for prompt movement of chromosomes: anchors AKAP9/CG-NAP, a scaffold protein of the gamma-tubulin ring complex and promotes centrosome maturation. The polypeptide is HEPACAM family member 2 (HEPACAM2) (Bos taurus (Bovine)).